The primary structure comprises 155 residues: MAAKLTQEQVDECREIFDLFDSDEDGRIAAGELVTALRSLGQNVDEAEARRFLADATASGGGGGGGGDIDFAAFLSVAARKMRRGATEKELAACLDVFDDARSGVIPAEQLRQAMVSHGDRLTEEEADEMVRKADPAGEGRVEYKEFVKVLMNNK.

EF-hand domains lie at 8-43 (EQVD…LGQN), 86-121 (ATEK…HGDR), and 122-155 (LTEE…MNNK). Asp-21, Asp-23, Asp-25, Arg-27, and Glu-32 together coordinate Ca(2+).

Its function is as follows. Potential calcium sensor. The polypeptide is Probable calcium-binding protein CML9 (CML9) (Oryza sativa subsp. japonica (Rice)).